A 428-amino-acid polypeptide reads, in one-letter code: Divergent protein kinase domain 1A (428 aa).

Topologically, residues 1–27 (MARGLFSRAWLSKTHHFQARLSYIRVK) are cytoplasmic. A helical transmembrane segment spans residues 28–48 (YLFLTWLAVFVSSWVVYVQYS). Over 49–428 (TYTELCRGRE…WKQISHTTDS (380 aa)) the chain is Lumenal.

It belongs to the DIPK family. Post-translationally, among the many cysteines in the lumenal domain, most are probably involved in disulfide bonds.

Its subcellular location is the endoplasmic reticulum membrane. This is Divergent protein kinase domain 1A (dipk1a) from Danio rerio (Zebrafish).